Reading from the N-terminus, the 873-residue chain is E3 ubiquitin-protein ligase UPL5 (873 aa).

Residues 1–19 (MTLSRSSADDSTNNANRSY) are compositionally biased toward polar residues. Disordered regions lie at residues 1-37 (MTLS…DSSD) and 70-90 (RSGE…SNRP). In terms of domain architecture, Ubiquitin-like spans 95–171 (LQIFVRMMSG…LQLVARMQST (77 aa)). Positions 272-296 (CLPIVLEFCKLLRKVCPDQKLYVTC) constitute a C-type lectin domain. The HECT domain maps to 532–873 (SPEALHGGLF…DHVSSSFGKW (342 aa)). Cysteine 839 serves as the catalytic Glycyl thioester intermediate.

Belongs to the UPL family. In terms of assembly, interacts with WRKY53.

Its subcellular location is the cytoplasm. The enzyme catalyses S-ubiquitinyl-[E2 ubiquitin-conjugating enzyme]-L-cysteine + [acceptor protein]-L-lysine = [E2 ubiquitin-conjugating enzyme]-L-cysteine + N(6)-ubiquitinyl-[acceptor protein]-L-lysine.. It functions in the pathway protein modification; protein ubiquitination. In terms of biological role, E3 ubiquitin protein ligase that regulates leaf senescence through ubiquitination and subsequent degradation of WRKY53. The chain is E3 ubiquitin-protein ligase UPL5 (UPL5) from Arabidopsis thaliana (Mouse-ear cress).